The primary structure comprises 431 residues: Levansucrase LscC (431 aa).

5 residues coordinate sucrose: tryptophan 61, aspartate 62, alanine 148, arginine 218, and aspartate 219. Aspartate 62 acts as the Nucleophile in catalysis. The active-site Proton donor/acceptor is the glutamate 303.

It belongs to the glycosyl hydrolase 68 family.

The protein resides in the periplasm. It carries out the reaction [6)-beta-D-fructofuranosyl-(2-&gt;](n) alpha-D-glucopyranoside + sucrose = [6)-beta-D-fructofuranosyl-(2-&gt;](n+1) alpha-D-glucopyranoside + D-glucose. In terms of biological role, catalyzes the synthesis of levan, a fructose polymer, by transferring the fructosyl moiety from sucrose to a growing acceptor molecule. In Pseudomonas savastanoi pv. glycinea (Pseudomonas syringae pv. glycinea), this protein is Levansucrase LscC.